A 1040-amino-acid chain; its full sequence is DNA cross-link repair 1A protein (1040 aa).

The segment at 1–190 (MLEDISEEDI…RAGDHPFSSP (190 aa)) is nuclear localization region. Positions 15 to 76 (SKRKPKRVDP…LGNAGCQTSV (62 aa)) are disordered. A compositionally biased stretch (basic and acidic residues) spans 53 to 65 (RAAEAKEVKDHEV). A UBZ4-type zinc finger spans residues 119 to 149 (DGYCPNCQMPFSSLIGQTPRWHVFECLDSPP). Zn(2+) contacts are provided by cysteine 122, cysteine 125, histidine 140, and cysteine 144. Glycyl lysine isopeptide (Lys-Gly) (interchain with G-Cter in SUMO2) cross-links involve residues lysine 202, lysine 236, lysine 269, lysine 353, lysine 361, lysine 429, lysine 488, lysine 508, lysine 517, lysine 533, and lysine 536. Residues 396–614 (LPYDLACTGG…KSLSDLEFDA (219 aa)) form a nuclear focus formation region. 2 disordered regions span residues 582–602 (GINL…CKRK) and 623–651 (SVEL…ACQK). The residue at position 590 (serine 590) is a Phosphoserine. Glycyl lysine isopeptide (Lys-Gly) (interchain with G-Cter in SUMO2) cross-links involve residues lysine 668, lysine 670, and lysine 674.

It belongs to the DNA repair metallo-beta-lactamase (DRMBL) family. As to quaternary structure, binds constitutively to TP53BP1. Binds CDC27, which is itself a component of the anaphase promoting complex (APC). Binds PIAS1. Expressed in brain, heart, kidney, liver, pancreas, placenta and skeletal muscle.

The protein localises to the nucleus. It catalyses the reaction a beta-lactam + H2O = a substituted beta-amino acid. Beta-lactamase activity is inhibited by sulbactam. Its function is as follows. May be required for DNA interstrand cross-link repair. Also required for checkpoint mediated cell cycle arrest in early prophase in response to mitotic spindle poisons. Possesses beta-lactamase activity, catalyzing the hydrolysis of penicillin G and nitrocefin. Exhibits no activity towards other beta-lactam antibiotic classes including cephalosporins (cefotaxime) and carbapenems (imipenem). The sequence is that of DNA cross-link repair 1A protein (DCLRE1A) from Homo sapiens (Human).